Here is a 369-residue protein sequence, read N- to C-terminus: Phospho-N-acetylmuramoyl-pentapeptide-transferase (369 aa).

The next 10 helical transmembrane spans lie at 3–23, 53–73, 81–101, 118–138, 162–182, 198–218, 240–260, 267–287, 290–310, and 347–367; these read ALLF…PLFI, GGIV…LLTW, VTPS…VGFL, WQKI…AITL, FMAL…CLIV, LAAG…FWQF, PLDL…FLWW, IFMG…LAIL, TELL…SVVL, and FWII…LEWI.

The protein belongs to the glycosyltransferase 4 family. MraY subfamily. It depends on Mg(2+) as a cofactor.

It is found in the cell membrane. The catalysed reaction is UDP-N-acetyl-alpha-D-muramoyl-L-alanyl-gamma-D-glutamyl-meso-2,6-diaminopimeloyl-D-alanyl-D-alanine + di-trans,octa-cis-undecaprenyl phosphate = di-trans,octa-cis-undecaprenyl diphospho-N-acetyl-alpha-D-muramoyl-L-alanyl-D-glutamyl-meso-2,6-diaminopimeloyl-D-alanyl-D-alanine + UMP. The protein operates within cell wall biogenesis; peptidoglycan biosynthesis. Functionally, catalyzes the initial step of the lipid cycle reactions in the biosynthesis of the cell wall peptidoglycan: transfers peptidoglycan precursor phospho-MurNAc-pentapeptide from UDP-MurNAc-pentapeptide onto the lipid carrier undecaprenyl phosphate, yielding undecaprenyl-pyrophosphoryl-MurNAc-pentapeptide, known as lipid I. The chain is Phospho-N-acetylmuramoyl-pentapeptide-transferase from Clavibacter michiganensis subsp. michiganensis (strain NCPPB 382).